The primary structure comprises 152 residues: Protein-export protein SecB (152 aa).

It belongs to the SecB family. As to quaternary structure, homotetramer, a dimer of dimers. One homotetramer interacts with 1 SecA dimer.

The protein resides in the cytoplasm. One of the proteins required for the normal export of preproteins out of the cell cytoplasm. It is a molecular chaperone that binds to a subset of precursor proteins, maintaining them in a translocation-competent state. It also specifically binds to its receptor SecA. This chain is Protein-export protein SecB, found in Rickettsia akari (strain Hartford).